The primary structure comprises 405 residues: Serine/threonine-protein kinase SSN3 (405 aa).

One can recognise a Protein kinase domain in the interval 40-350 (YEIIGYIAAG…ANDALLHPYF (311 aa)). ATP contacts are provided by residues 46-54 (IAAGTYGRV) and lysine 71. Aspartate 173 acts as the Proton acceptor in catalysis. Positions 377–405 (DSDIKTMTYQGTKRGSQGGDNLHPRKKQK) are disordered. The segment covering 381 to 391 (KTMTYQGTKRG) has biased composition (polar residues).

The protein belongs to the protein kinase superfamily. CMGC Ser/Thr protein kinase family. CDC2/CDKX subfamily. In terms of assembly, component of the srb8-11 complex, a regulatory module of the Mediator complex. Mg(2+) is required as a cofactor.

Its subcellular location is the nucleus. It carries out the reaction L-seryl-[protein] + ATP = O-phospho-L-seryl-[protein] + ADP + H(+). The catalysed reaction is L-threonyl-[protein] + ATP = O-phospho-L-threonyl-[protein] + ADP + H(+). The enzyme catalyses [DNA-directed RNA polymerase] + ATP = phospho-[DNA-directed RNA polymerase] + ADP + H(+). Component of the srb8-11 complex. The srb8-11 complex is a regulatory module of the Mediator complex which is itself dependent transcription. The srb8-11 complex may be involved in the transcriptional repression of a subset of genes regulated by Mediator. It may inhibit the association of the Mediator complex with RNA polymerase II to form the holoenzyme complex. The srb8-11 complex phosphorylates the C-terminal domain (CTD) of the largest subunit of RNA polymerase II. In Yarrowia lipolytica (strain CLIB 122 / E 150) (Yeast), this protein is Serine/threonine-protein kinase SSN3 (SSN3).